Here is a 238-residue protein sequence, read N- to C-terminus: MASEITYAEVKFKNESNSLHTYSESPAAPREKPIRDLRKPGSPSLLLTSLMLLLLLLAITFLVAFIIYFQKYSQLLEEKKAAKNIMHNELNCTKSVSPMEDKVWSCCPKDWRLFGSHCYLVPTVSSSASWNKSEENCSRMGAHLVVIQSQEEQDFITGILDTHAAYFIGLWDTGHRQWQWVDQTPYEESITFWHNGEPSSGNEKCATIIYRWKTGWGWNDISCSLKQKSVCQMKKINL.

Residues 1 to 48 (MASEITYAEVKFKNESNSLHTYSESPAAPREKPIRDLRKPGSPSLLLT) are Cytoplasmic-facing. The ITIM motif motif lies at 5–10 (ITYAEV). The chain crosses the membrane as a helical; Signal-anchor for type II membrane protein span at residues 49–69 (SLMLLLLLLAITFLVAFIIYF). The Extracellular segment spans residues 70 to 238 (QKYSQLLEEK…SVCQMKKINL (169 aa)). Residue Asn-91 is glycosylated (N-linked (GlcNAc...) asparagine). A disulfide bridge connects residues Cys-107 and Cys-118. Residues 126-233 (SSASWNKSEE…SLKQKSVCQM (108 aa)) enclose the C-type lectin domain. 2 N-linked (GlcNAc...) asparagine glycosylation sites follow: Asn-131 and Asn-136. Disulfide bonds link Cys-137–Cys-231 and Cys-205–Cys-223. The Ca(2+) site is built by Val-146, Glu-152, Glu-197, Ser-199, and Glu-203. Alpha-D-mannopyranose contacts are provided by residues 197 to 199 (EPS) and Glu-203. 209–211 (IYR) contributes to the N-acetyl-D-glucosamine binding site. Ca(2+)-binding residues include Asn-219 and Asp-220.

May interact with PTPN6 via its ITIM site. In terms of tissue distribution, expressed in splenic antigen-presenting cells including B-cells, monocytes/macrophages, and dendritic cells (at protein level). Expressed in spleen and lymph node and slightly increased with dendritic cell maturation.

It is found in the cell membrane. Its function is as follows. May be involved in regulating immune reactivity. May play a role in modulating dendritic cells (DC) differentiation and/or maturation. May be involved in the inhibition of B-cell-receptor-mediated calcium mobilization and protein tyrosine phosphorylation. C-type lectin receptor that binds carbohydrates mannose and fucose but also weakly interacts with N-acetylglucosamine (GlcNAc) in a Ca(2+)-dependent manner. Involved in regulating immune reactivity. Once triggered by antigen, it is internalized by clathrin-dependent endocytosis and delivers its antigenic cargo into the antigen presentation pathway resulting in cross-priming of CD8(+) T cells. This cross-presentation and cross-priming are enhanced by TLR7 and TLR8 agonists with increased expansion of the CD8(+) T cells, high production of IFNG and TNF with reduced levels of IL4, IL5 and IL13. In plasmacytoid dendritic cells, inhibits TLR9-mediated IFNA and TNF production. May be involved via its ITIM motif (immunoreceptor tyrosine-based inhibitory motifs) in the inhibition of B-cell-receptor-mediated calcium mobilization and protein tyrosine phosphorylation. The sequence is that of C-type lectin domain family 4 member A (Clec4a) from Mus musculus (Mouse).